A 267-amino-acid chain; its full sequence is MSDLRLVIAGCGGRMGRALIEAVTSTPGVVLAGALERAESPLVGQDAGLPLGLTTGVRVSHDVDAALARADALIDFTRPEATLAYLAACRRHKVNMIIGTTGFDDAGKAAIRDAGQEIGIVFAPNFSVGVNLTFKLLDLAARVLNEGYDIEIIEAHHRHKVDAPSGTALRMGEVVADALGRDLKTCAVYGREGVTGERDPGTIGFATVRAGDVVGDHTVLFATPGERVEITHKASSRLTFANGAVRAARWLGKRHGQFDMQDVLGLR.

Residues 10 to 15 and E36 contribute to the NAD(+) site; that span reads GCGGRM. R37 is an NADP(+) binding site. Residues 99 to 101 and 123 to 126 contribute to the NAD(+) site; these read GTT and APNF. H156 (proton donor/acceptor) is an active-site residue. H157 contacts (S)-2,3,4,5-tetrahydrodipicolinate. Residue K160 is the Proton donor of the active site. (S)-2,3,4,5-tetrahydrodipicolinate is bound at residue 166 to 167; that stretch reads GT.

The protein belongs to the DapB family.

Its subcellular location is the cytoplasm. The enzyme catalyses (S)-2,3,4,5-tetrahydrodipicolinate + NAD(+) + H2O = (2S,4S)-4-hydroxy-2,3,4,5-tetrahydrodipicolinate + NADH + H(+). It catalyses the reaction (S)-2,3,4,5-tetrahydrodipicolinate + NADP(+) + H2O = (2S,4S)-4-hydroxy-2,3,4,5-tetrahydrodipicolinate + NADPH + H(+). Its pathway is amino-acid biosynthesis; L-lysine biosynthesis via DAP pathway; (S)-tetrahydrodipicolinate from L-aspartate: step 4/4. Catalyzes the conversion of 4-hydroxy-tetrahydrodipicolinate (HTPA) to tetrahydrodipicolinate. In Laribacter hongkongensis (strain HLHK9), this protein is 4-hydroxy-tetrahydrodipicolinate reductase.